The primary structure comprises 365 residues: Probable tRNA pseudouridine synthase B (365 aa).

D43 serves as the catalytic Nucleophile. The PUA domain occupies 209 to 285 (YPKIVVKRSA…DHIFLEADDG (77 aa)). A disordered region spans residues 300–365 (SGSGLHKDIQ…GKERHGRDHQ (66 aa)). Composition is skewed to basic and acidic residues over residues 304-318 (LHKD…KDTR), 326-336 (TGPEKTADRVW), and 354-365 (GGGKERHGRDHQ).

This sequence belongs to the pseudouridine synthase TruB family. Type 2 subfamily.

The catalysed reaction is uridine(55) in tRNA = pseudouridine(55) in tRNA. In terms of biological role, could be responsible for synthesis of pseudouridine from uracil-55 in the psi GC loop of transfer RNAs. This Thermoplasma acidophilum (strain ATCC 25905 / DSM 1728 / JCM 9062 / NBRC 15155 / AMRC-C165) protein is Probable tRNA pseudouridine synthase B.